The chain runs to 266 residues: Killer cell lectin-like receptor 8 (266 aa).

The Cytoplasmic portion of the chain corresponds to Met1–Gln44. The chain crosses the membrane as a helical; Signal-anchor for type II membrane protein span at residues Leu45–Thr66. Topologically, residues Lys67–Asp266 are extracellular. N-linked (GlcNAc...) asparagine glycans are attached at residues Asn87 and Asn104. One can recognise a C-type lectin domain in the interval Gly143–Leu261. Intrachain disulfides connect Cys149-Cys154, Cys167-Cys255, Cys171-Cys257, and Cys236-Cys249.

Homodimer; disulfide-linked. Interacts with the adapter protein TYROBP/DAP12; the interaction leads to natural killer cell activation.

Its subcellular location is the cell membrane. Its function is as follows. Receptor on natural killer (NK) cells for class I MHC. The sequence is that of Killer cell lectin-like receptor 8 (Klra8) from Mus musculus (Mouse).